The following is a 596-amino-acid chain: uncharacterized protein (596 aa).

Composition is skewed to basic residues over residues 1–10 (MRLRSQKRGN) and 18–29 (KTRKGKGKKLKP). The interval 1 to 30 (MRLRSQKRGNKFVALPAKTRKGKGKKLKPK) is disordered.

This is an uncharacterized protein from Magallana gigas (Pacific oyster).